We begin with the raw amino-acid sequence, 889 residues long: Low-affinity potassium transport protein (889 aa).

At 1–51 (MPTAKRTSSRASLALPFQLRLVHKKSWGHRLRDFISGFLKSCRPIAKYVFP) the chain is on the cytoplasmic side. A helical transmembrane segment spans residues 52 to 73 (NFIVVHYIYLITLSIIGSILLY). Residues 74–80 (PCKNTAF) are Extracellular-facing. A helical membrane pass occupies residues 81–101 (IDVLFLAAGASTQGGLATKST). Residues 102-109 (NDFNLYQQ) lie on the Cytoplasmic side of the membrane. Residues 110 to 130 (IVVYVITLLSTPILIHGFLAF) form a helical membrane-spanning segment. Residues 131-464 (VRLYWFERYF…EYRALRLLCC (334 aa)) are Extracellular-facing. The interval 189–244 (REDPRQSASDVPMDSPDTSALSSISPLNVSSSKEESSDTQSSPPNFSSKRQPSDVD) is disordered. The segment covering 207–219 (SALSSISPLNVSS) has biased composition (low complexity). Residues Asn216, Asn233, and Asn265 are each glycosylated (N-linked (GlcNAc...) asparagine). A helical membrane pass occupies residues 465-487 (ILMVYYIGFNILAFVTIVPWACT). Residues 488 to 499 (RHHYSEIIRRNG) lie on the Cytoplasmic side of the membrane. A helical membrane pass occupies residues 500–521 (VSPTWWGFFTAMSAFSNLGLSL). The Extracellular segment spans residues 522–524 (TAD). The chain crosses the membrane as a helical span at residues 525-545 (SMVSFDTAPYPLIFMMFFIII). Residues 546-548 (GNT) lie on the Cytoplasmic side of the membrane. Residues 549-569 (GFPIMLRFIIWIMFKTSRDLS) traverse the membrane as a helical segment. Residues 570-584 (QFKESLGFLLDHPRR) are Extracellular-facing. The chain crosses the membrane as a helical span at residues 585–605 (CFTLLFPSGPTWWLFTTLVVL). Residues 606-609 (NATD) are Cytoplasmic-facing. Residues 610-630 (WILFIILDFNSAVVRQVAKGY) traverse the membrane as a helical segment. Topologically, residues 631 to 657 (RALMGLFQSVCTRTAGFNVVDLSKLHP) are extracellular. The chain crosses the membrane as a helical span at residues 658–678 (SIQVSYMLMMYVSVLPLAISI). Residues 679-743 (RRTNVYEEQS…KSFVGAHLRR (65 aa)) are Cytoplasmic-facing. The tract at residues 705–733 (DDIKETDHDGESEERDTVSTKSKPKKQSP) is disordered. The helical transmembrane segment at 744–764 (QLSFDLWYLFLGLFIICICEG) threads the bilayer. Topologically, residues 765–776 (RKIEDVNKPDFN) are extracellular. A helical membrane pass occupies residues 777–797 (VFAILFEVVSAYGTVGLSLGY). Residues 798 to 889 (PNTNTSLSAQ…KIATKFWGKH (92 aa)) lie on the Cytoplasmic side of the membrane.

This sequence belongs to the TrkH potassium transport family.

The protein localises to the membrane. In terms of biological role, this protein is required for low-affinity potassium transport. This Saccharomyces cerevisiae (strain ATCC 204508 / S288c) (Baker's yeast) protein is Low-affinity potassium transport protein (TRK2).